We begin with the raw amino-acid sequence, 503 residues long: Lysine--tRNA ligase (503 aa).

Mg(2+) is bound by residues Glu-412 and Glu-419.

It belongs to the class-II aminoacyl-tRNA synthetase family. In terms of assembly, homodimer. Mg(2+) serves as cofactor.

Its subcellular location is the cytoplasm. It catalyses the reaction tRNA(Lys) + L-lysine + ATP = L-lysyl-tRNA(Lys) + AMP + diphosphate. The sequence is that of Lysine--tRNA ligase from Idiomarina loihiensis (strain ATCC BAA-735 / DSM 15497 / L2-TR).